The chain runs to 212 residues: ATP phosphoribosyltransferase (212 aa).

Belongs to the ATP phosphoribosyltransferase family. Short subfamily. Heteromultimer composed of HisG and HisZ subunits.

It is found in the cytoplasm. It carries out the reaction 1-(5-phospho-beta-D-ribosyl)-ATP + diphosphate = 5-phospho-alpha-D-ribose 1-diphosphate + ATP. The protein operates within amino-acid biosynthesis; L-histidine biosynthesis; L-histidine from 5-phospho-alpha-D-ribose 1-diphosphate: step 1/9. In terms of biological role, catalyzes the condensation of ATP and 5-phosphoribose 1-diphosphate to form N'-(5'-phosphoribosyl)-ATP (PR-ATP). Has a crucial role in the pathway because the rate of histidine biosynthesis seems to be controlled primarily by regulation of HisG enzymatic activity. This chain is ATP phosphoribosyltransferase (hisG), found in Halalkalibacterium halodurans (strain ATCC BAA-125 / DSM 18197 / FERM 7344 / JCM 9153 / C-125) (Bacillus halodurans).